A 266-amino-acid polypeptide reads, in one-letter code: Undecaprenyl-diphosphatase (266 aa).

Transmembrane regions (helical) follow at residues 8–28, 39–59, 87–107, 113–133, 188–208, 219–239, and 246–266; these read VLAL…AHLI, QGLA…VIYF, WAVG…HDII, SAQV…FADV, SFLL…LGLV, MIVL…HYFL, and TMLP…FLFW.

This sequence belongs to the UppP family.

Its subcellular location is the cell inner membrane. It carries out the reaction di-trans,octa-cis-undecaprenyl diphosphate + H2O = di-trans,octa-cis-undecaprenyl phosphate + phosphate + H(+). Catalyzes the dephosphorylation of undecaprenyl diphosphate (UPP). Confers resistance to bacitracin. The protein is Undecaprenyl-diphosphatase of Thioalkalivibrio sulfidiphilus (strain HL-EbGR7).